Consider the following 289-residue polypeptide: MARTTYKETALDEGDQLEIVHFIGGGDRSDPQPADDPFTVAGRVFSSRLLVGTGKYRDFEETARAIEASGAEIVTVAVRRVNVSDPSQPMLVDYVDPAKYTYLPNTAGCFTADEAVRTLRLAREAGGWSLVKLEVLGDQRTLYPNMAETFLAAEALIRDGFEVMVYCADDPIAAKRLEDMGCVAIMPLGSLIGSGLGIINPYTIRLIKESVSVPVLVDAGVGTASDAAVAMELGCDGVLMNTAIAQAKDPVRMARAMRLAIEAGRLSYQAGRMPRKLYADPSSPLAGLI.

Residue Lys132 is the Schiff-base intermediate with DXP of the active site. 1-deoxy-D-xylulose 5-phosphate contacts are provided by residues Gly193, 219-220 (AG), and 241-242 (NT).

The protein belongs to the ThiG family. In terms of assembly, homotetramer. Forms heterodimers with either ThiH or ThiS.

The protein localises to the cytoplasm. The enzyme catalyses [ThiS sulfur-carrier protein]-C-terminal-Gly-aminoethanethioate + 2-iminoacetate + 1-deoxy-D-xylulose 5-phosphate = [ThiS sulfur-carrier protein]-C-terminal Gly-Gly + 2-[(2R,5Z)-2-carboxy-4-methylthiazol-5(2H)-ylidene]ethyl phosphate + 2 H2O + H(+). It participates in cofactor biosynthesis; thiamine diphosphate biosynthesis. Its function is as follows. Catalyzes the rearrangement of 1-deoxy-D-xylulose 5-phosphate (DXP) to produce the thiazole phosphate moiety of thiamine. Sulfur is provided by the thiocarboxylate moiety of the carrier protein ThiS. In vitro, sulfur can be provided by H(2)S. This is Thiazole synthase from Rhodospirillum rubrum (strain ATCC 11170 / ATH 1.1.1 / DSM 467 / LMG 4362 / NCIMB 8255 / S1).